The chain runs to 362 residues: Transcription factor bHLH128 (362 aa).

Positions 1–16 (MYQSSSSTSSSSQRSS) are enriched in low complexity. Disordered regions lie at residues 1-23 (MYQSSSSTSSSSQRSSLPGGGGL), 78-106 (SDSTTCGVNNSSDGQKQLGNNNNNNSNKD), 120-140 (SQQHKSNDIGGGNSSGSYSLA), and 162-184 (LNQPTSDYSPQGGSNGGRGHSRL). Over residues 78–96 (SDSTTCGVNNSSDGQKQLG) the composition is skewed to polar residues. Over residues 162 to 173 (LNQPTSDYSPQG) the composition is skewed to polar residues. Ser-189 carries the phosphoserine modification. The bHLH domain maps to 289–339 (CATHPRSIAERERRTRISGKLKKLQDLVPNMDKQTSYSDMLDLAVQHIKGL).

In terms of assembly, homodimer.

Its subcellular location is the nucleus. The sequence is that of Transcription factor bHLH128 (BHLH128) from Arabidopsis thaliana (Mouse-ear cress).